Consider the following 204-residue polypeptide: High frequency lysogenization protein HflD homolog (204 aa).

This sequence belongs to the HflD family.

It localises to the cytoplasm. Its subcellular location is the cell inner membrane. The polypeptide is High frequency lysogenization protein HflD homolog (Xanthomonas axonopodis pv. citri (strain 306)).